A 1029-amino-acid polypeptide reads, in one-letter code: FYVE, RhoGEF and PH domain-containing protein tag-77 (1029 aa).

2 stretches are compositionally biased toward basic and acidic residues: residues 1–12 (MKYDMNHRKNSD) and 20–39 (TVKEMMAEFQNKLDDGDNRF). Disordered regions lie at residues 1-155 (MKYD…ATSE), 185-254 (VPRM…ERKT), and 279-370 (NNGV…EKDD). A compositionally biased stretch (pro residues) spans 42 to 56 (QPPPPPSPRRAPPPP). Low complexity-rich tracts occupy residues 76-85 (PPSSSESSEN) and 122-133 (SSSTSDVSSQNS). Polar residues-rich tracts occupy residues 141 to 155 (SCTTPTILVSPATSE) and 200 to 211 (PISQVSTLSQVS). Acidic residues predominate over residues 212–227 (DEFDEGDTSASDEESM). A compositionally biased stretch (low complexity) spans 316 to 334 (SPTSGMSSSSTDDFSRITS). Positions 335–347 (MTSDRSSILTSHS) are enriched in polar residues. The 198-residue stretch at 375 to 572 (KLHYAAVEFL…ENVTQAVNQK (198 aa)) folds into the DH domain. The 104-residue stretch at 593 to 696 (NVLEPGRVLI…WTDDLTKAQY (104 aa)) folds into the PH domain. Zn(2+) is bound by residues Cys-810, Cys-823, Cys-826, Cys-831, Cys-834, Cys-851, and Cys-854. The FYVE-type; degenerate zinc finger occupies 810 to 859 (CSTEFNIINRRHHCRDCGWLICKFCKGQAPLSKYDFTKQNVCSECFDRHY).

Its subcellular location is the cytoplasm. It is found in the cytoskeleton. Activates cdc-42, a member of the Ras-like family of Rho- and Rac proteins, by exchanging bound GDP for free GTP. May play a role in regulating the actin cytoskeleton and cell shape. Required for normal lifespan. The polypeptide is FYVE, RhoGEF and PH domain-containing protein tag-77 (Caenorhabditis elegans).